Here is a 221-residue protein sequence, read N- to C-terminus: Ribosomal RNA large subunit methyltransferase E (221 aa).

S-adenosyl-L-methionine contacts are provided by glycine 60, tryptophan 62, aspartate 89, aspartate 105, and aspartate 134. Lysine 174 (proton acceptor) is an active-site residue. Residues 199 to 221 (KPKASRDKSSETFLLGRQLKHPG) form a disordered region.

This sequence belongs to the class I-like SAM-binding methyltransferase superfamily. RNA methyltransferase RlmE family.

The protein localises to the cytoplasm. The enzyme catalyses uridine(2552) in 23S rRNA + S-adenosyl-L-methionine = 2'-O-methyluridine(2552) in 23S rRNA + S-adenosyl-L-homocysteine + H(+). Its function is as follows. Specifically methylates the uridine in position 2552 of 23S rRNA at the 2'-O position of the ribose in the fully assembled 50S ribosomal subunit. The protein is Ribosomal RNA large subunit methyltransferase E of Ralstonia pickettii (strain 12J).